A 118-amino-acid chain; its full sequence is Ribulose bisphosphate carboxylase small subunit (118 aa).

Belongs to the RuBisCO small chain family. Heterohexadecamer of 8 large and 8 small subunits.

RuBisCO catalyzes two reactions: the carboxylation of D-ribulose 1,5-bisphosphate, the primary event in carbon dioxide fixation, as well as the oxidative fragmentation of the pentose substrate. Both reactions occur simultaneously and in competition at the same active site. Although the small subunit is not catalytic it is essential for maximal activity. This chain is Ribulose bisphosphate carboxylase small subunit, found in Rhodobacter capsulatus (Rhodopseudomonas capsulata).